The following is a 305-amino-acid chain: Putative glutamine amidotransferase MTH_191 (305 aa).

Cysteine 2 is a catalytic residue. The Glutamine amidotransferase type-2 domain maps to 2-305; it reads CGIAGVVYKD…SPGEVRVYEI (304 aa).

The protein is Putative glutamine amidotransferase MTH_191 of Methanothermobacter thermautotrophicus (strain ATCC 29096 / DSM 1053 / JCM 10044 / NBRC 100330 / Delta H) (Methanobacterium thermoautotrophicum).